A 548-amino-acid polypeptide reads, in one-letter code: Non-structural protein NS1 (548 aa).

This sequence belongs to the orbivirus non-structural protein NS1 family.

The sequence is that of Non-structural protein NS1 (Segment-5) from African horse sickness virus (AHSV).